The chain runs to 130 residues: Small ribosomal subunit protein uS8 (130 aa).

It belongs to the universal ribosomal protein uS8 family. In terms of assembly, part of the 30S ribosomal subunit.

In terms of biological role, one of the primary rRNA binding proteins, it binds directly to 16S rRNA central domain where it helps coordinate assembly of the platform of the 30S subunit. This is Small ribosomal subunit protein uS8 from Thermococcus gammatolerans (strain DSM 15229 / JCM 11827 / EJ3).